Here is a 199-residue protein sequence, read N- to C-terminus: Adenylate kinase (199 aa).

Residue 10–15 (GAGKGT) participates in ATP binding. The segment at 30-59 (STGDMLRAAVAARTPVGLQAKSIMESGGLV) is NMP. AMP is bound by residues Thr-31, Arg-36, 57–59 (GLV), 85–88 (GFPR), and Gln-92. The tract at residues 126–142 (KRAAETLARGEAVRKDD) is LID. Arg-127 is an ATP binding site. Positions 139 and 150 each coordinate AMP. Position 178 (Ala-178) interacts with ATP.

This sequence belongs to the adenylate kinase family. As to quaternary structure, monomer.

The protein localises to the cytoplasm. It catalyses the reaction AMP + ATP = 2 ADP. Its pathway is purine metabolism; AMP biosynthesis via salvage pathway; AMP from ADP: step 1/1. Catalyzes the reversible transfer of the terminal phosphate group between ATP and AMP. Plays an important role in cellular energy homeostasis and in adenine nucleotide metabolism. This is Adenylate kinase from Methylobacterium nodulans (strain LMG 21967 / CNCM I-2342 / ORS 2060).